The following is a 132-amino-acid chain: MAPAKEIWAVGRRKTSVARAKIKEGSGKITVNHKDIKDYLQNRKAIIEEAVRPLSLLNVLDKYDLNLNVSGGGITGQVGAIRHALARAICRIKPEFRPAVKKEGFLTRDPRMVERKKYGLHKARRGTQFSKR.

This sequence belongs to the universal ribosomal protein uS9 family.

This chain is Small ribosomal subunit protein uS9, found in Leptospira borgpetersenii serovar Hardjo-bovis (strain JB197).